A 421-amino-acid chain; its full sequence is UDP-N-acetylglucosamine 1-carboxyvinyltransferase (421 aa).

Position 22-23 (22-23 (KN)) interacts with phosphoenolpyruvate. Residue R92 coordinates UDP-N-acetyl-alpha-D-glucosamine. Catalysis depends on C116, which acts as the Proton donor. 2-(S-cysteinyl)pyruvic acid O-phosphothioketal is present on C116. Positions 307 and 329 each coordinate UDP-N-acetyl-alpha-D-glucosamine.

The protein belongs to the EPSP synthase family. MurA subfamily.

Its subcellular location is the cytoplasm. It catalyses the reaction phosphoenolpyruvate + UDP-N-acetyl-alpha-D-glucosamine = UDP-N-acetyl-3-O-(1-carboxyvinyl)-alpha-D-glucosamine + phosphate. Its pathway is cell wall biogenesis; peptidoglycan biosynthesis. Its function is as follows. Cell wall formation. Adds enolpyruvyl to UDP-N-acetylglucosamine. The chain is UDP-N-acetylglucosamine 1-carboxyvinyltransferase from Kosmotoga olearia (strain ATCC BAA-1733 / DSM 21960 / TBF 19.5.1).